We begin with the raw amino-acid sequence, 1522 residues long: MAKDWQDARLGQCHRLEDYSNVAINYTGPYLTPSGTMAYHPGNAPLFTQAPPHTNPQGPPPFPLFNSISPVYDPATGRLLYRNVNTQVSHTAIPNPANGYAAVYGGPPSQLPPPPQPQSHPNVTVISASPARAIEQQPTILSSTDSNIPRPGTVKSSASPFVPNQNPSAPPPPPQEYRQLNVTDALSYLDLVKLQFHQEPEIYNEFLDIMKEFKSQAIETPEVITRVSKLFAGYPNLIQGFNTFLPPGYSIEISSADPGSLAGIHITTPQGPLMINDLGKTTAPPPPHGSTTPLPAAASYTSMNMKQSSASHPVLQPPAPSTLQFNPSPSPAAPSYPPVDASVKQAADLDQAINFVNNVKNRFSHKPEAYNSFLDILKSYQHDQRPIQLVYFQVSQLFAEAPDLLEEFKRFLPDVSVNAPAETQDKSTVVPQESATATPKRSPSATPTSALPPIGKFAPPTTAKAQPAPEKRRGEPAVQTRNHSKRTRTATSSVEETTPRAFNVPIAQNKNPSELEFLEHARQYLANESKYNEFIKLLELYSQEVFDKNALVERCYVFFGSNEHLMNWLKDLVKYNPANPIPVPRPRVDLTQCKSCGPSYRLLPKIELLLPCSGRDDLCWTILNDAWVSFPTLASEDSGFIAHRKNQFEENLHKLEEERYEYDRHIGANMRFIELLQIHADKMLKMSEVEKANWTLPSNLGGKSVSIYHKVIKKVYGKEHAQQIIENLQKNPSVTIPIVLERLKKKDREWRSLQNHWNELWHDIEEKNFYRSLDHQGVSFKSVDKKSTTPKFLISELRNLAQQQKVELSEGKVTPSHQFLFSYKDPNIITDIARLFGVFLIHGSTHSAEDNEKMSNFLRSFLSLFFDVPYDSFIPYLPTHFNEEESDIDSLSSSLIEKPRASSSPIHHANNNGLRLLKDVLKKTYRGARENRSSVKEDYVSESTERTPDASEIDEHISEHEENDDESSSVFSTGEVWVNCKFTDTDGSLLDDGTKLSDRSVYNLFGNMSLYCFFRLFHTLYSRLEEIKNLEQMAYSKQHDVKSNPVAVELGLVRHPSERLGFALPTADTVYEQAIQLCERLMEGEIDQNGFEDALRCLYGIHAFRLYTVEKLVTSIIKQLHSVTTNRRLAQVFMYYEKDRVQRRTSPRQQIMYRIQTETAFGPDENLCCIDWNSQTRQSAIRLMGREDLTMGTLKSDAEKWCYYIGSYIMSSPTEGILPEHVRIPFLRKCLPSDEGNEDDESSSVVKSANAIITSFLESGLALTIPINTVKIRYENGTEDVFARNSEQVYNGPYDKIRDYRQSKWREWLNSDEGWTQGLSKDKVRRIKPCTIESLFNESTLRSGKAERFSENAGVESIGKKGKNLLNESGNGKKLDKGLPPKVNGKSSVTRGNKTNLKARNGRNNDDSSNKINLSEKEKEKESIEDEEKNREGSMSPVAKHASDVEDDHDVAKSTAPDFETSSHRPERSSEKKSPSPVFTSVKQTAENDADNEDDKTDMDDQTEETLDADNTMEEEPSKDDL.

Residues 139–174 are disordered; sequence TILSSTDSNIPRPGTVKSSASPFVPNQNPSAPPPPP. Positions 178-248 constitute a PAH 1 domain; sequence RQLNVTDALS…QGFNTFLPPG (71 aa). Residues 307 to 339 are disordered; that stretch reads QSSASHPVLQPPAPSTLQFNPSPSPAAPSYPPV. The segment covering 328-337 has biased composition (pro residues); the sequence is SPSPAAPSYP. The PAH 2 domain occupies 345–415; that stretch reads QAADLDQAIN…EEFKRFLPDV (71 aa). 3 disordered regions span residues 422–504, 928–968, and 1343–1522; these read ETQD…AFNV, AREN…DESS, and SGKA…KDDL. Residues 426-441 are compositionally biased toward polar residues; it reads KSTVVPQESATATPKR. Serine 442 is modified (phosphoserine). Positions 442-468 are enriched in low complexity; that stretch reads SPSATPTSALPPIGKFAPPTTAKAQPA. Threonine 446 bears the Phosphothreonine mark. The region spanning 504–576 is the PAH 3 domain; sequence VPIAQNKNPS…NWLKDLVKYN (73 aa). Residues 928–960 are compositionally biased toward basic and acidic residues; sequence ARENRSSVKEDYVSESTERTPDASEIDEHISEH. Residues 1385-1398 are compositionally biased toward polar residues; it reads GKSSVTRGNKTNLK. Residues 1403–1432 show a composition bias toward basic and acidic residues; it reads RNNDDSSNKINLSEKEKEKESIEDEEKNRE. The residue at position 1443 (serine 1443) is a Phosphoserine. A compositionally biased stretch (basic and acidic residues) spans 1461-1474; the sequence is TSSHRPERSSEKKS. A compositionally biased stretch (polar residues) spans 1478 to 1487; it reads VFTSVKQTAE. Acidic residues predominate over residues 1488–1522; that stretch reads NDADNEDDKTDMDDQTEETLDADNTMEEEPSKDDL.

Its subcellular location is the nucleus. Its function is as follows. Has a role in modulating the nuclear import of TF1 virus-like particles. Essential for viability. This Schizosaccharomyces pombe (strain 972 / ATCC 24843) (Fission yeast) protein is Paired amphipathic helix protein pst1 (pst1).